The chain runs to 276 residues: Pyridinium-3,5-bisthiocarboxylic acid mononucleotide synthase (276 aa).

Residue cysteine 176 is the Nucleophile and sulfur donor of the active site. Cysteine 176 carries the post-translational modification 2,3-didehydroalanine (Cys).

The protein belongs to the LarE family.

It catalyses the reaction pyridinium-3,5-dicarboxylate mononucleotide + [LarE protein]-L-cysteine + ATP = [LarE protein]-dehydroalanine + pyridinium-3-carboxylate-5-thiocarboxylate mononucleotide + AMP + diphosphate + H(+). The catalysed reaction is [LarE protein]-L-cysteine + pyridinium-3-carboxylate-5-thiocarboxylate mononucleotide + ATP = pyridinium-3,5-bisthiocarboxylate mononucleotide + [LarE protein]-dehydroalanine + AMP + diphosphate + H(+). Involved in the biosynthesis of a nickel-pincer cofactor ((SCS)Ni(II) pincer complex). Catalyzes the ATP-dependent incorporation of two sulfur atoms in pyridinium-3,5-biscarboxylic acid mononucleotide (P2CMN) to yield pyridinium-3,5-bisthiocarboxylic acid mononucleotide (P2TMN). The source of sulfur is the enzyme itself: Cys-176 of LarE is the sulfur donor, thereby being converted into dehydroalanine, and is not regenerated in vivo. Thus, two molecules of LarE undergo sacrificial sulfur transfer to create one P2TMN. Binds nickel. Is required for the activation of the lactate racemase LarA. May also be involved in the activation of other nickel-pincer cofactor-dependent enzymes. The chain is Pyridinium-3,5-bisthiocarboxylic acid mononucleotide synthase from Lactiplantibacillus plantarum (strain ATCC BAA-793 / NCIMB 8826 / WCFS1) (Lactobacillus plantarum).